We begin with the raw amino-acid sequence, 152 residues long: Deoxyuridine 5'-triphosphate nucleotidohydrolase (152 aa).

Substrate is bound by residues Arg71–Gly73, Asn84, Leu88–Asp90, and Met98.

This sequence belongs to the dUTPase family. Mg(2+) serves as cofactor.

The enzyme catalyses dUTP + H2O = dUMP + diphosphate + H(+). Its pathway is pyrimidine metabolism; dUMP biosynthesis; dUMP from dCTP (dUTP route): step 2/2. In terms of biological role, this enzyme is involved in nucleotide metabolism: it produces dUMP, the immediate precursor of thymidine nucleotides and it decreases the intracellular concentration of dUTP so that uracil cannot be incorporated into DNA. The sequence is that of Deoxyuridine 5'-triphosphate nucleotidohydrolase from Erwinia tasmaniensis (strain DSM 17950 / CFBP 7177 / CIP 109463 / NCPPB 4357 / Et1/99).